Here is a 177-residue protein sequence, read N- to C-terminus: UPF0114 protein HP_0189 (177 aa).

3 helical membrane passes run Trp-15–Phe-35, Leu-54–Val-74, and Pro-145–Val-165.

Belongs to the UPF0114 family.

It localises to the cell membrane. The chain is UPF0114 protein HP_0189 from Helicobacter pylori (strain ATCC 700392 / 26695) (Campylobacter pylori).